The primary structure comprises 142 residues: MLNKIQQRNSDIYSMTPFNFFEDFRRNLFNDLKSNLIKTDIHETDNEYVVEAELPGIPKEDIQVNYENGVLTISGQRQIDAAIEDEKGKLIHSERSLTSVRRQYLLENVKEDEIKASYSDGILKVTLPKDSNKEIKTSIPIE.

Residues 27 to 142 enclose the sHSP domain; it reads NLFNDLKSNL…KEIKTSIPIE (116 aa).

It belongs to the small heat shock protein (HSP20) family.

It localises to the cytoplasm. The chain is Heat shock protein HSP.16.4 from Streptococcus thermophilus.